Consider the following 97-residue polypeptide: Nucleoid-associated protein HPAG1_0033 (97 aa).

The protein belongs to the YbaB/EbfC family. In terms of assembly, homodimer.

Its subcellular location is the cytoplasm. The protein resides in the nucleoid. Binds to DNA and alters its conformation. May be involved in regulation of gene expression, nucleoid organization and DNA protection. The protein is Nucleoid-associated protein HPAG1_0033 of Helicobacter pylori (strain HPAG1).